We begin with the raw amino-acid sequence, 337 residues long: Glyceraldehyde-3-phosphate dehydrogenase (337 aa).

Residues 17 to 18, aspartate 39, lysine 83, and serine 125 each bind NAD(+); that span reads RI. D-glyceraldehyde 3-phosphate contacts are provided by residues 156–158, threonine 187, arginine 202, 215–216, and arginine 238; these read SCT and TG. The active-site Nucleophile is the cysteine 157. Residue asparagine 319 participates in NAD(+) binding.

This sequence belongs to the glyceraldehyde-3-phosphate dehydrogenase family. As to quaternary structure, homotetramer.

It is found in the cytoplasm. The catalysed reaction is D-glyceraldehyde 3-phosphate + phosphate + NAD(+) = (2R)-3-phospho-glyceroyl phosphate + NADH + H(+). It participates in carbohydrate degradation; glycolysis; pyruvate from D-glyceraldehyde 3-phosphate: step 1/5. Functionally, catalyzes the oxidative phosphorylation of glyceraldehyde 3-phosphate (G3P) to 1,3-bisphosphoglycerate (BPG) using the cofactor NAD. The first reaction step involves the formation of a hemiacetal intermediate between G3P and a cysteine residue, and this hemiacetal intermediate is then oxidized to a thioester, with concomitant reduction of NAD to NADH. The reduced NADH is then exchanged with the second NAD, and the thioester is attacked by a nucleophilic inorganic phosphate to produce BPG. This chain is Glyceraldehyde-3-phosphate dehydrogenase (gapA), found in Mycoplasma genitalium (strain ATCC 33530 / DSM 19775 / NCTC 10195 / G37) (Mycoplasmoides genitalium).